Consider the following 583-residue polypeptide: uncharacterized protein (583 aa).

24-140 provides a ligand contact to a nucleoside 3',5'-cyclic phosphate; that stretch reads ILADIDDEQL…SAMLRAMARM (117 aa). In terms of domain architecture, PNPLA spans 309 to 469; sequence LVMAGGGARG…LNNLPANVMC (161 aa). The short motif at 313–318 is the GXGXXG element; the sequence is GGGARG. The short motif at 340 to 344 is the GXSXG element; that stretch reads GTSSG. The active-site Nucleophile is Ser-342. Asp-456 acts as the Proton acceptor in catalysis. A DGA/G motif is present at residues 456-458; that stretch reads DGG.

The protein belongs to the NTE family.

This is an uncharacterized protein from Mycobacterium bovis (strain ATCC BAA-935 / AF2122/97).